A 242-amino-acid polypeptide reads, in one-letter code: UPF0246 protein SSA_1395 (242 aa).

It belongs to the UPF0246 family.

This chain is UPF0246 protein SSA_1395, found in Streptococcus sanguinis (strain SK36).